Here is a 180-residue protein sequence, read N- to C-terminus: ATP-dependent protease subunit HslV (180 aa).

The active site involves Thr7. The Na(+) site is built by Ala164, Cys167, and Thr170.

This sequence belongs to the peptidase T1B family. HslV subfamily. As to quaternary structure, a double ring-shaped homohexamer of HslV is capped on each side by a ring-shaped HslU homohexamer. The assembly of the HslU/HslV complex is dependent on binding of ATP.

The protein localises to the cytoplasm. It carries out the reaction ATP-dependent cleavage of peptide bonds with broad specificity.. Its activity is regulated as follows. Allosterically activated by HslU binding. In terms of biological role, protease subunit of a proteasome-like degradation complex believed to be a general protein degrading machinery. The protein is ATP-dependent protease subunit HslV of Brevibacillus brevis (strain 47 / JCM 6285 / NBRC 100599).